A 51-amino-acid polypeptide reads, in one-letter code: Otoconin-90 (51 aa).

The protein belongs to the phospholipase A2 family. In terms of assembly, interacts with OTOL1.

Its subcellular location is the secreted. Major protein of the otoconia, a calcium carbonate structure in the saccule and utricle of the ear. Together with OTOL1, acts as a scaffold for otoconia biomineralization: sequesters calcium and forms interconnecting fibrils between otoconia that are incorporated into the calcium crystal structure. Together with OTOL1, modulates calcite crystal morphology and growth kinetics. It is unlikely that this protein has phospholipase A2 activity. The protein is Otoconin-90 (OC90) of Cavia porcellus (Guinea pig).